The primary structure comprises 237 residues: Ribosomal RNA small subunit methyltransferase G (237 aa).

S-adenosyl-L-methionine contacts are provided by residues Gly76, Phe81, 128 to 129 (VE), and Arg147.

Belongs to the methyltransferase superfamily. RNA methyltransferase RsmG family.

It localises to the cytoplasm. Functionally, specifically methylates the N7 position of a guanine in 16S rRNA. The protein is Ribosomal RNA small subunit methyltransferase G of Prochlorococcus marinus (strain MIT 9215).